The following is a 405-amino-acid chain: Syndecan-3 (405 aa).

The first 22 residues, 1-22, serve as a signal peptide directing secretion; sequence MPAELRRLAVLLLLLSARAALA. The Extracellular segment spans residues 23–347; sequence QPWRNENYER…PQKNILERKE (325 aa). The segment at 31-59 is disordered; that stretch reads ERPVDLEGSGDDDPFGDDELDDIYSGSGS. Positions 38–52 are enriched in acidic residues; it reads GSGDDDPFGDDELDD. Residues serine 39, serine 55, serine 57, serine 59, and serine 66 are each glycosylated (O-linked (Xyl...) (glycosaminoglycan) serine). 2 disordered regions span residues 134–159 and 191–301; these read TTTA…ATTT and TRAT…ELGN. The span at 191–201 shows a compositional bias: low complexity; the sequence is TRATTLETPTT. Residues 202 to 237 show a composition bias toward polar residues; that stretch reads SIPETSVLTEVTTSRLVPSSTAKPRSLPKPSTSRTA. 3 O-linked (Xyl...) (glycosaminoglycan) serine glycosylation sites follow: serine 280, serine 283, and serine 330. A helical transmembrane segment spans residues 348–372; that stretch reads VLIAVIVGGVVGALFAAFLVMLLIY. Over 373–405 the chain is Cytoplasmic; sequence RMKKKDEGSYTLEEPKQANVTYQKPDKQEEFYA.

It belongs to the syndecan proteoglycan family. O-glycosylated within the Thr/Ser-rich region which could interact with lectin domains on other molecules. As to expression, proximal chondrogenic central core of embryonic limb buds where cartilage differentiation is being initiated.

It localises to the membrane. In terms of biological role, cell surface proteoglycan that may bear both heparan sulfate and chondroitin sulfate. The multiple functional domains provide potential sites for mediating the adhesive cell-matrix interactions and cytoskeletal reorganization involved in limb chondrogenesis. Interaction with other matrix ligands as well as phosphorylation and shedding of the ectodomain might be involved in cell shape changes that occur during chondrogenesis. Furthermore, shedding of the ectodomain might break the adhesive interactions that promoted condensation, thus facilitating the deposition of cartilage matrix molecules. In Gallus gallus (Chicken), this protein is Syndecan-3 (SDC3).